The primary structure comprises 216 residues: MSCLPALDKFLQNYHQAYLTTLGELPRYYPQGEPSVCIQGEFFADSDKPIAWQPVKRDEVGSFTNVEHALDLPLWPDIHLFYGQYFSAPLLFDSKWGTGELLQVWNDDDFKCLQQNVIGHLMMKKKLKQPPTWFIGLLDEGDKMLTINNSDGSVWIEIPGEEQSEQLSTSLTAFIEALSPRIAPPVKHEELPMPALDHPGIFANIKRMWQNLFGKS.

It belongs to the Syd family.

It is found in the cell inner membrane. Functionally, interacts with the SecY protein in vivo. May bind preferentially to an uncomplexed state of SecY, thus functioning either as a chelating agent for excess SecY in the cell or as a regulatory factor that negatively controls the translocase function. This Shewanella putrefaciens (strain CN-32 / ATCC BAA-453) protein is Protein Syd.